We begin with the raw amino-acid sequence, 309 residues long: Ribosomal RNA small subunit methyltransferase H (309 aa).

Residues 32-34 (AGH), Asp52, Phe79, Asp100, and Gln107 each bind S-adenosyl-L-methionine.

It belongs to the methyltransferase superfamily. RsmH family.

It localises to the cytoplasm. The catalysed reaction is cytidine(1402) in 16S rRNA + S-adenosyl-L-methionine = N(4)-methylcytidine(1402) in 16S rRNA + S-adenosyl-L-homocysteine + H(+). Functionally, specifically methylates the N4 position of cytidine in position 1402 (C1402) of 16S rRNA. This is Ribosomal RNA small subunit methyltransferase H from Mycoplasma capricolum subsp. capricolum (strain California kid / ATCC 27343 / NCTC 10154).